The sequence spans 59 residues: Protein translocase subunit SecE (59 aa).

The chain crosses the membrane as a helical span at residues 37–57 (LIVLLFVGLLAFLVQLAFSIL).

It belongs to the SecE/SEC61-gamma family. In terms of assembly, component of the Sec protein translocase complex. Heterotrimer consisting of SecY (alpha), SecG (beta) and SecE (gamma) subunits. The heterotrimers can form oligomers, although 1 heterotrimer is thought to be able to translocate proteins. Interacts with the ribosome. May interact with SecDF, and other proteins may be involved.

It is found in the cell membrane. Essential subunit of the Sec protein translocation channel SecYEG. Clamps together the 2 halves of SecY. May contact the channel plug during translocation. The polypeptide is Protein translocase subunit SecE (Metallosphaera sedula (strain ATCC 51363 / DSM 5348 / JCM 9185 / NBRC 15509 / TH2)).